The following is a 161-amino-acid chain: Vitamin K epoxide reductase complex subunit 1 (161 aa).

Over 1–9 (MGTTWRSPG) the chain is Cytoplasmic. A helical membrane pass occupies residues 10–29 (RLRLALCLAGLALSLYALHV). Residues 30–80 (KAARARNEDYRALCDVGTAISCSRVFSSRWGRGFGLVEHVLGADSILNQSN) lie on the Lumenal side of the membrane. A disulfide bridge connects residues Cys43 and Cys51. Residue Asn80 participates in (S)-warfarin binding. A helical transmembrane segment spans residues 81–95 (SIFGCMFYTIQLLLG). The Cytoplasmic segment spans residues 96 to 100 (CLRGR). The chain crosses the membrane as a helical span at residues 101–128 (WASILLILSSLVSVAGSLYLAWILFFVL). Residues 129 to 131 (YDF) are Lumenal-facing. A disulfide bridge connects residues Cys132 and Cys135. The helical transmembrane segment at 132–153 (CIVCITTYAINAGLMLLSFQKV) threads the bilayer. The phylloquinone site is built by Cys135 and Tyr139. Position 139 (Tyr139) interacts with (S)-warfarin. At 154–161 (PEHKVKKP) the chain is on the cytoplasmic side.

The protein belongs to the VKOR family. In terms of tissue distribution, highly expressed in liver. Detected at lower levels in lung, kidney and testis.

It is found in the endoplasmic reticulum membrane. The catalysed reaction is phylloquinone + [protein]-disulfide + H2O = 2,3-epoxyphylloquinone + [protein]-dithiol. It carries out the reaction phylloquinol + [protein]-disulfide = phylloquinone + [protein]-dithiol. With respect to regulation, inhibited by warfarin (coumadin). Warfarin locks VKORC1 in both redox states into the closed conformation. Involved in vitamin K metabolism. Catalytic subunit of the vitamin K epoxide reductase (VKOR) complex which reduces inactive vitamin K 2,3-epoxide to active vitamin K. Vitamin K is required for the gamma-carboxylation of various proteins, including clotting factors, and is required for normal blood coagulation, but also for normal bone development. In Rattus norvegicus (Rat), this protein is Vitamin K epoxide reductase complex subunit 1 (Vkorc1).